Consider the following 109-residue polypeptide: Large ribosomal subunit protein uL22 (109 aa).

This sequence belongs to the universal ribosomal protein uL22 family. As to quaternary structure, part of the 50S ribosomal subunit.

Functionally, this protein binds specifically to 23S rRNA; its binding is stimulated by other ribosomal proteins, e.g. L4, L17, and L20. It is important during the early stages of 50S assembly. It makes multiple contacts with different domains of the 23S rRNA in the assembled 50S subunit and ribosome. In terms of biological role, the globular domain of the protein is located near the polypeptide exit tunnel on the outside of the subunit, while an extended beta-hairpin is found that lines the wall of the exit tunnel in the center of the 70S ribosome. The sequence is that of Large ribosomal subunit protein uL22 from Cupriavidus necator (strain ATCC 17699 / DSM 428 / KCTC 22496 / NCIMB 10442 / H16 / Stanier 337) (Ralstonia eutropha).